Consider the following 139-residue polypeptide: D-ribose pyranase (139 aa).

The active-site Proton donor is His20. Substrate contacts are provided by residues Asp28, His106, and 128–130; that span reads YAN.

The protein belongs to the RbsD / FucU family. RbsD subfamily. In terms of assembly, homodecamer.

The protein localises to the cytoplasm. It carries out the reaction beta-D-ribopyranose = beta-D-ribofuranose. The protein operates within carbohydrate metabolism; D-ribose degradation; D-ribose 5-phosphate from beta-D-ribopyranose: step 1/2. Its function is as follows. Catalyzes the interconversion of beta-pyran and beta-furan forms of D-ribose. In Salmonella typhi, this protein is D-ribose pyranase.